A 688-amino-acid chain; its full sequence is Probable glucan endo-1,3-beta-glucosidase btgC (688 aa).

3 disordered regions span residues 1–91 (MSGP…NLGP), 126–148 (ANIP…PEPP), and 168–195 (GQLT…IPYQ). At 1 to 307 (MSGPNRTYSF…PKPGGGNKKR (307 aa)) the chain is on the cytoplasmic side. Over residues 175–188 (SVSHLSSTNPSQRN) the composition is skewed to polar residues. Residues 308–328 (GWIVGAILAFIIIGAIVGGAV) form a helical; Signal-anchor for type II membrane protein membrane-spanning segment. Residues 329 to 688 (GGTIGHRGNE…IPDCGGKTAT (360 aa)) are Extracellular-facing. A disordered region spans residues 334–363 (HRGNEEPSSASSASSSSTQTATEDTSVNGD). Positions 341 to 355 (SSASSASSSSTQTAT) are enriched in low complexity. Residues asparagine 408, asparagine 431, and asparagine 459 are each glycosylated (N-linked (GlcNAc...) asparagine). The Proton donor role is filled by glutamate 491. Glutamate 590 serves as the catalytic Nucleophile. N-linked (GlcNAc...) asparagine glycans are attached at residues asparagine 609 and asparagine 635.

It belongs to the glycosyl hydrolase 17 family.

It localises to the cell membrane. It carries out the reaction Hydrolysis of (1-&gt;3)-beta-D-glucosidic linkages in (1-&gt;3)-beta-D-glucans.. Its function is as follows. Glucanases play a role in cell expansion during growth, in cell-cell fusion during mating, and in spore release during sporulation. This enzyme may be involved in beta-glucan degradation. Active on laminarin and lichenan. This chain is Probable glucan endo-1,3-beta-glucosidase btgC (btgC), found in Aspergillus fumigatus (strain ATCC MYA-4609 / CBS 101355 / FGSC A1100 / Af293) (Neosartorya fumigata).